The primary structure comprises 323 residues: Movement protein (323 aa).

A coiled-coil region spans residues 292–322; it reads SLLENKDENLLRSMSTKIDTLGKKLSLIYDN.

This sequence belongs to the caulimoviridae movement protein family. Homotrimer, through the coiled-coil domain. Interacts with VAP.

It localises to the host cell junction. The protein localises to the host plasmodesma. Functionally, transports viral genome to neighboring plant cells directly through plasmosdesmata, without any budding. The movement protein allows efficient cell to cell propagation, by bypassing the host cell wall barrier. Acts by forming tubules structures that increase the size exclusion limit (SEL) of plasmodesmata, thereby allowing viral ribonucleocapsids to spread directly to neighboring cells. This chain is Movement protein, found in Figwort mosaic virus (strain DxS) (FMV).